An 859-amino-acid chain; its full sequence is Kinesin-like protein KIN-14T (859 aa).

The Kinesin motor domain maps to 91-411; that stretch reads NIRVFCRVKP…LNFATRAKNI (321 aa). Residue 168-175 participates in ATP binding; it reads GQTGTGKT. Residues 422–463 adopt a coiled-coil conformation; sequence QAKKEAVMMNLQKMMEKIEQEREMSLRKMRNLNETLEKLTGK. The interval 511–530 is disordered; sequence LSGADFSVTPNSSSFKSRRN. The segment covering 518–530 has biased composition (polar residues); the sequence is VTPNSSSFKSRRN.

The protein belongs to the TRAFAC class myosin-kinesin ATPase superfamily. Kinesin family. KIN-14 subfamily.

The chain is Kinesin-like protein KIN-14T from Arabidopsis thaliana (Mouse-ear cress).